Consider the following 85-residue polypeptide: Beta-insect depressant toxin BmKITb (85 aa).

The first 21 residues, 1–21 (MKLFLLLVISASMLIDGLVNA), serve as a signal peptide directing secretion. In terms of domain architecture, LCN-type CS-alpha/beta spans 22 to 82 (DGYIRGSNGC…TWKSESNTCG (61 aa)). 4 disulfide bridges follow: Cys31/Cys81, Cys35/Cys56, Cys42/Cys63, and Cys46/Cys65. Gly82 bears the Glycine amide mark.

Expressed by the venom gland.

Its subcellular location is the secreted. In terms of biological role, depressant insect beta-toxins cause a transient contraction paralysis followed by a slow flaccid paralysis. They bind voltage-independently at site-4 of sodium channels (Nav) and shift the voltage of activation toward more negative potentials thereby affecting sodium channel activation and promoting spontaneous and repetitive firing. However, this toxin has some characteristics of excitatory toxins such as bursts of activity after the membrane has been hyperpolarized. This toxin is active only on insects. The sequence is that of Beta-insect depressant toxin BmKITb from Olivierus martensii (Manchurian scorpion).